The primary structure comprises 192 residues: Ion-translocating oxidoreductase complex subunit A (192 aa).

6 helical membrane passes run 5–25 (LLLL…FLGL), 39–59 (IGMS…SYLV), 65–85 (LPFD…AVVV), 102–122 (ALGI…VALL), 134–154 (AIYG…FSAM), and 171–191 (AIAM…TGLV).

Belongs to the NqrDE/RnfAE family. In terms of assembly, the complex is composed of six subunits: RnfA, RnfB, RnfC, RnfD, RnfE and RnfG.

The protein localises to the cell inner membrane. In terms of biological role, part of a membrane-bound complex that couples electron transfer with translocation of ions across the membrane. The protein is Ion-translocating oxidoreductase complex subunit A of Shewanella baltica (strain OS185).